Reading from the N-terminus, the 429-residue chain is Carboxypeptidase B (429 aa).

Positions 1–15 (MKFLLVLALCAVVYA) are cleaved as a signal peptide. Residues 121 to 423 (NYQELEVIDE…EGIVVGARRA (303 aa)) enclose the Peptidase M14 domain. 2 residues coordinate Zn(2+): histidine 182 and glutamate 185. Substrate-binding positions include 182 to 185 (HARE), arginine 236, and 256 to 257 (NR). An intrachain disulfide couples cysteine 250 to cysteine 273. Histidine 309 contacts Zn(2+). Substrate is bound by residues 310–311 (SF) and tyrosine 365. Glutamate 387 (proton donor/acceptor) is an active-site residue.

Belongs to the peptidase M14 family. The cofactor is Zn(2+).

It localises to the secreted. It carries out the reaction Preferential release of a C-terminal lysine or arginine amino acid.. Highly resistant to inhibition by potato carboxypeptidase inhibitor (PCI). Moderately inhibited by leech carboxypeptidase inhibitor (LCI) and tick carboxypeptidase inhibitor (TCI). Functionally, metalloprotease which cleaves a single amino acid from the C-terminal end of polypeptide chains. Shows a strong preference for peptides with a terminal lysine residue. In Helicoverpa zea (Corn earworm moth), this protein is Carboxypeptidase B.